The chain runs to 185 residues: Protein N-terminal glutamine amidohydrolase (185 aa).

Active-site residues include Cys14, His62, and Asp78.

This sequence belongs to the NTAQ1 family. In terms of assembly, monomer.

The enzyme catalyses N-terminal L-glutaminyl-[protein] + H2O = N-terminal L-glutamyl-[protein] + NH4(+). In terms of biological role, mediates the side-chain deamidation of N-terminal glutamine residues to glutamate, an important step in N-end rule pathway of protein degradation. Conversion of the resulting N-terminal glutamine to glutamate renders the protein susceptible to arginylation, polyubiquitination and degradation as specified by the N-end rule. Does not act on substrates with internal or C-terminal glutamine and does not act on non-glutamine residues in any position. This chain is Protein N-terminal glutamine amidohydrolase, found in Caenorhabditis briggsae.